The primary structure comprises 331 residues: Phenylalanine--tRNA ligase alpha subunit (331 aa).

Glu-252 contacts Mg(2+).

The protein belongs to the class-II aminoacyl-tRNA synthetase family. Phe-tRNA synthetase alpha subunit type 1 subfamily. Tetramer of two alpha and two beta subunits. Requires Mg(2+) as cofactor.

The protein localises to the cytoplasm. It catalyses the reaction tRNA(Phe) + L-phenylalanine + ATP = L-phenylalanyl-tRNA(Phe) + AMP + diphosphate + H(+). The sequence is that of Phenylalanine--tRNA ligase alpha subunit from Stenotrophomonas maltophilia (strain R551-3).